The chain runs to 523 residues: Cytoplasmic dynein 1 light intermediate chain 1 (523 aa).

The interval 1-25 is disordered; it reads MAAVGRVGSFGSSPPGLSSTYTGGP. Over residues 9 to 19 the composition is skewed to low complexity; it reads SFGSSPPGLSS. 74-81 is a binding site for ATP; that stretch reads GEDGAGKT. Ser207 carries the post-translational modification Phosphoserine. Thr213 carries the phosphothreonine modification. Disordered stretches follow at residues 387 to 434 and 456 to 523; these read PPTA…DPNM and TGSP…GEAS. Ser398 and Ser405 each carry phosphoserine. Thr408 is modified (phosphothreonine). Ser412, Ser419, Ser421, and Ser427 each carry phosphoserine. Low complexity predominate over residues 412 to 421; sequence SVSSNVASVS. Over residues 458–478 the composition is skewed to gly residues; sequence SPGGPGVSGGSPAGGAGGGSS. Ser487 carries the phosphoserine modification. Over residues 493–503 the composition is skewed to basic and acidic residues; sequence LDVHAELDRIT. The span at 506-523 shows a compositional bias: low complexity; sequence PVTVSPTTPTSPTEGEAS. A Phosphoserine modification is found at Ser510. Phosphothreonine is present on residues Thr512, Thr513, and Thr515. At Ser516 the chain carries Phosphoserine.

This sequence belongs to the dynein light intermediate chain family. Homodimer. The cytoplasmic dynein 1 complex consists of two catalytic heavy chains (HCs) and a number of non-catalytic subunits presented by intermediate chains (ICs), light intermediate chains (LICs) and light chains (LCs); the composition seems to vary in respect to the IC, LIC and LC composition. The heavy chain homodimer serves as a scaffold for the probable homodimeric assembly of the respective non-catalytic subunits. The ICs and LICs bind directly to the HC dimer and the LCs assemble on the IC dimer. Self-associates. Interacts with DYNC1H1; DYNC1LI1 and DYNC1LI2 bind mutually exclusive to DYNC1H1. Interacts with PCNT. Forms a complex with RAB11FIP3 and RAB11A1; the interaction between DYNC1LI1 and RAB11FIP3 is direct and induces DYNC1LI1 localization onto endosomal membrane; the complex regulates endocytic trafficking. Interacts with RUFY3. In terms of assembly, (Microbial infection) Interacts with human adenovirus 5 hexon protein; this interaction probably allows virus intracellular transport. Post-translationally, phosphorylated during mitosis but not in interphase.

The protein resides in the cytoplasm. Its subcellular location is the chromosome. The protein localises to the centromere. It is found in the kinetochore. It localises to the cytoskeleton. The protein resides in the spindle pole. Its subcellular location is the recycling endosome membrane. Acts as one of several non-catalytic accessory components of the cytoplasmic dynein 1 complex that are thought to be involved in linking dynein to cargos and to adapter proteins that regulate dynein function. Cytoplasmic dynein 1 acts as a motor for the intracellular retrograde motility of vesicles and organelles along microtubules. May play a role in binding dynein to membranous organelles or chromosomes. Probably involved in the microtubule-dependent transport of pericentrin. Is required for progress through the spindle assembly checkpoint. The phosphorylated form appears to be involved in the selective removal of MAD1L1 and MAD1L2 but not BUB1B from kinetochores. Forms a functional Rab11/RAB11FIP3/dynein complex onto endosomal membrane that regulates the movement of peripheral sorting endosomes (SE) along microtubule tracks toward the microtubule organizing center/centrosome, generating the endosomal recycling compartment (ERC). This is Cytoplasmic dynein 1 light intermediate chain 1 (DYNC1LI1) from Homo sapiens (Human).